Here is a 261-residue protein sequence, read N- to C-terminus: Type III pantothenate kinase (261 aa).

Residue 6 to 13 participates in ATP binding; the sequence is DVGNTNTV. 107–110 is a substrate binding site; it reads GADR. Aspartate 109 acts as the Proton acceptor in catalysis. Residue aspartate 129 coordinates K(+). Residue threonine 132 participates in ATP binding. Threonine 183 serves as a coordination point for substrate.

It belongs to the type III pantothenate kinase family. Homodimer. The cofactor is NH4(+). K(+) serves as cofactor.

Its subcellular location is the cytoplasm. It carries out the reaction (R)-pantothenate + ATP = (R)-4'-phosphopantothenate + ADP + H(+). It participates in cofactor biosynthesis; coenzyme A biosynthesis; CoA from (R)-pantothenate: step 1/5. Its function is as follows. Catalyzes the phosphorylation of pantothenate (Pan), the first step in CoA biosynthesis. The sequence is that of Type III pantothenate kinase from Kosmotoga olearia (strain ATCC BAA-1733 / DSM 21960 / TBF 19.5.1).